We begin with the raw amino-acid sequence, 556 residues long: Thermosome subunit beta (556 aa).

The interval 530 to 556 (LSTDKGDDDGGAGGMGGGMGGGMGGMM) is disordered. The span at 540–556 (GAGGMGGGMGGGMGGMM) shows a compositional bias: gly residues.

The protein belongs to the TCP-1 chaperonin family. Forms an oligomeric complex of eight-membered rings.

Functionally, molecular chaperone; binds unfolded polypeptides in vitro, and has a weak ATPase activity. In Halobacterium salinarum (strain ATCC 700922 / JCM 11081 / NRC-1) (Halobacterium halobium), this protein is Thermosome subunit beta (thsB).